The chain runs to 600 residues: Probable translation initiation factor IF-2 (600 aa).

A tr-type G domain is found at 13-228; it reads LRTPIVAVLG…VLMGLAQRYM (216 aa). A G1 region spans residues 22 to 29; that stretch reads GHVDHGKT. 22–29 is a GTP binding site; the sequence is GHVDHGKT. The tract at residues 47–51 is G2; sequence AITQH. Residues 84 to 87 are G3; the sequence is DTPG. Residues 84–88 and 138–141 each bind GTP; these read DTPGH and NKID. The segment at 138 to 141 is G4; it reads NKID. The interval 140 to 162 is disordered; it reads IDTTPGWNPNPDAPVQGTYDDQS. The segment at 206–208 is G5; sequence SAE.

Belongs to the TRAFAC class translation factor GTPase superfamily. Classic translation factor GTPase family. IF-2 subfamily.

In terms of biological role, function in general translation initiation by promoting the binding of the formylmethionine-tRNA to ribosomes. Seems to function along with eIF-2. The protein is Probable translation initiation factor IF-2 of Halobacterium salinarum (strain ATCC 700922 / JCM 11081 / NRC-1) (Halobacterium halobium).